Consider the following 243-residue polypeptide: Ribonuclease PH (243 aa).

Residues R84 and 122-124 (GTR) each bind phosphate.

The protein belongs to the RNase PH family. In terms of assembly, homohexameric ring arranged as a trimer of dimers.

The enzyme catalyses tRNA(n+1) + phosphate = tRNA(n) + a ribonucleoside 5'-diphosphate. Functionally, phosphorolytic 3'-5' exoribonuclease that plays an important role in tRNA 3'-end maturation. Removes nucleotide residues following the 3'-CCA terminus of tRNAs; can also add nucleotides to the ends of RNA molecules by using nucleoside diphosphates as substrates, but this may not be physiologically important. Probably plays a role in initiation of 16S rRNA degradation (leading to ribosome degradation) during starvation. This is Ribonuclease PH from Bdellovibrio bacteriovorus (strain ATCC 15356 / DSM 50701 / NCIMB 9529 / HD100).